We begin with the raw amino-acid sequence, 322 residues long: 4-hydroxythreonine-4-phosphate dehydrogenase (322 aa).

Residue Thr132 coordinates substrate. His160, His205, and His260 together coordinate a divalent metal cation. Residues Lys268, Asn277, and Arg286 each contribute to the substrate site.

Belongs to the PdxA family. In terms of assembly, homodimer. It depends on Zn(2+) as a cofactor. The cofactor is Mg(2+). Co(2+) is required as a cofactor.

It is found in the cytoplasm. The enzyme catalyses 4-(phosphooxy)-L-threonine + NAD(+) = 3-amino-2-oxopropyl phosphate + CO2 + NADH. It participates in cofactor biosynthesis; pyridoxine 5'-phosphate biosynthesis; pyridoxine 5'-phosphate from D-erythrose 4-phosphate: step 4/5. Catalyzes the NAD(P)-dependent oxidation of 4-(phosphooxy)-L-threonine (HTP) into 2-amino-3-oxo-4-(phosphooxy)butyric acid which spontaneously decarboxylates to form 3-amino-2-oxopropyl phosphate (AHAP). This is 4-hydroxythreonine-4-phosphate dehydrogenase from Xanthomonas campestris pv. campestris (strain 8004).